Here is a 218-residue protein sequence, read N- to C-terminus: dTTP/UTP pyrophosphatase (218 aa).

The active-site Proton acceptor is the aspartate 76.

Belongs to the Maf family. YhdE subfamily. Requires a divalent metal cation as cofactor.

The protein resides in the cytoplasm. The catalysed reaction is dTTP + H2O = dTMP + diphosphate + H(+). It catalyses the reaction UTP + H2O = UMP + diphosphate + H(+). Its function is as follows. Nucleoside triphosphate pyrophosphatase that hydrolyzes dTTP and UTP. May have a dual role in cell division arrest and in preventing the incorporation of modified nucleotides into cellular nucleic acids. In Cytophaga hutchinsonii (strain ATCC 33406 / DSM 1761 / CIP 103989 / NBRC 15051 / NCIMB 9469 / D465), this protein is dTTP/UTP pyrophosphatase.